The primary structure comprises 289 residues: Urease accessory protein UreD (289 aa).

The protein belongs to the UreD family. As to quaternary structure, ureD, UreF and UreG form a complex that acts as a GTP-hydrolysis-dependent molecular chaperone, activating the urease apoprotein by helping to assemble the nickel containing metallocenter of UreC. The UreE protein probably delivers the nickel.

It is found in the cytoplasm. Its function is as follows. Required for maturation of urease via the functional incorporation of the urease nickel metallocenter. The polypeptide is Urease accessory protein UreD (Xanthobacter autotrophicus (strain ATCC BAA-1158 / Py2)).